Here is a 142-residue protein sequence, read N- to C-terminus: Neuritin (142 aa).

Residues 1-27 form the signal peptide; the sequence is MGLKLNGRYISLILAVQIAYLVQAVRA. Gly116 is lipidated: GPI-anchor amidated glycine. A propeptide spans 117–142 (removed in mature form); that stretch reads AAGPLLPALPVLLVSLSAALATWLSF.

The protein belongs to the neuritin family. In terms of assembly, component of the outer core of AMPAR complex. AMPAR complex consists of an inner core made of 4 pore-forming GluA/GRIA proteins (GRIA1, GRIA2, GRIA3 and GRIA4) and 4 major auxiliary subunits arranged in a twofold symmetry. One of the two pairs of distinct binding sites is occupied either by CNIH2, CNIH3 or CACNG2, CACNG3. The other harbors CACNG2, CACNG3, CACNG4, CACNG8 or GSG1L. This inner core of AMPAR complex is complemented by outer core constituents binding directly to the GluA/GRIA proteins at sites distinct from the interaction sites of the inner core constituents. Outer core constituents include at least PRRT1, PRRT2, CKAMP44/SHISA9, FRRS1L and NRN1. The proteins of the inner and outer core serve as a platform for other, more peripherally associated AMPAR constituents. Alone or in combination, these auxiliary subunits control the gating and pharmacology of the AMPAR complex and profoundly impact their biogenesis and protein processing.

It is found in the cell membrane. It localises to the synapse. In terms of biological role, promotes neurite outgrowth and especially branching of neuritic processes in primary hippocampal and cortical cells. The polypeptide is Neuritin (NRN1) (Bos taurus (Bovine)).